We begin with the raw amino-acid sequence, 239 residues long: Putative zinc finger protein 132L (239 aa).

The tract at residues 20–40 (DASLSTKSPKREPSQEKEIKK) is disordered. Positions 28-40 (PKREPSQEKEIKK) are enriched in basic and acidic residues. 2 consecutive C3H1-type zinc fingers follow at residues 44–68 (IKKN…HPGE) and 81–106 (RRKT…HDES). Residues 128–151 (PGECKFSHPPPPPPSPPSPPPKEE) form a disordered region. Pro residues predominate over residues 135–147 (HPPPPPPSPPSPP).

The chain is Putative zinc finger protein 132L from Acheta domesticus (House cricket).